Consider the following 396-residue polypeptide: MQQKALTKKLKNFTMNFGPQHPAAHGVLRLVLELNGEVVNRADPHIGLLHRGTEKLIEYKNYLQALPYFDRLDYVSMMAQEHAYSLAVEKLLGCEVPKRAQYIRVLFCEITRILNHLMAVTTHALDVGAMTPFLWGFEEREKLMEFYERVSGARMHAAYIRPGGVSQDMPMGLSEDIYKFAKQFGSRIDEIEDVLSSNRIWKQRLVDIGTVSAEEALDWGFSGVMLRGSGIAWDLRKTQPYDVYDELEFDIPVGTKGDCYDRYLIRVEEMRQSLKLIMQCLNKMPTGVIKVDDKKISPPSRVDMKDSMEALIHHFKLYTEGYSVPIGETYTAVEAPKGEFGVYLVSDGSSKPYRCKIKAPGFSHLQGLNFMSKGHMIADVVTIIGTQDIVFGEVDR.

This sequence belongs to the complex I 49 kDa subunit family.

The protein resides in the mitochondrion. It carries out the reaction a ubiquinone + NADH + 5 H(+)(in) = a ubiquinol + NAD(+) + 4 H(+)(out). Functionally, core subunit of the mitochondrial membrane respiratory chain NADH dehydrogenase (Complex I) that is believed to belong to the minimal assembly required for catalysis. Complex I functions in the transfer of electrons from NADH to the respiratory chain. The immediate electron acceptor for the enzyme is believed to be ubiquinone. Component of the iron-sulfur (IP) fragment of the enzyme. Component of the iron-sulfur (IP) fragment of the enzyme. The sequence is that of NADH-ubiquinone oxidoreductase 49 kDa subunit (NAD7) from Reclinomonas americana.